The following is a 279-amino-acid chain: Proteasome subunit beta (279 aa).

A propeptide spans 1–53 (MAAAFDPSGRLPDLFTSAGTSSFSAFLSMAAPELLPGRRPLPPGTAADLTPHA) (removed in mature form; by autocatalysis). The active-site Nucleophile is Thr54.

Belongs to the peptidase T1B family. The 20S proteasome core is composed of 14 alpha and 14 beta subunits that assemble into four stacked heptameric rings, resulting in a barrel-shaped structure. The two inner rings, each composed of seven catalytic beta subunits, are sandwiched by two outer rings, each composed of seven alpha subunits. The catalytic chamber with the active sites is on the inside of the barrel. Has a gated structure, the ends of the cylinder being occluded by the N-termini of the alpha-subunits. Is capped by the proteasome-associated ATPase, ARC.

Its subcellular location is the cytoplasm. It carries out the reaction Cleavage of peptide bonds with very broad specificity.. The protein operates within protein degradation; proteasomal Pup-dependent pathway. With respect to regulation, the formation of the proteasomal ATPase ARC-20S proteasome complex, likely via the docking of the C-termini of ARC into the intersubunit pockets in the alpha-rings, may trigger opening of the gate for substrate entry. Interconversion between the open-gate and close-gate conformations leads to a dynamic regulation of the 20S proteasome proteolysis activity. In terms of biological role, component of the proteasome core, a large protease complex with broad specificity involved in protein degradation. This Salinispora arenicola (strain CNS-205) protein is Proteasome subunit beta.